Consider the following 80-residue polypeptide: MSVFHDEVEIEDFEFDEEKDVYHYPCPCGDRFEIPREMLEMGEDVAQCPSCSLLIRVIYDPEDFVKLETISTSKPIAEPV.

The DPH-type MB domain occupies 4–60 (FHDEVEIEDFEFDEEKDVYHYPCPCGDRFEIPREMLEMGEDVAQCPSCSLLIRVIYD). 4 residues coordinate Fe cation: C26, C28, C48, and C51.

The protein belongs to the DPH3 family. As to quaternary structure, component of the 2-(3-amino-3-carboxypropyl)histidine synthase complex composed of dph-1, dph-2, dph-3 and a NADH-dependent reductase. It depends on Fe(2+) as a cofactor.

It catalyses the reaction [3Fe-4S](1+)-[protein] + Fe(2+)-[Dph3] = [3Fe-4S](0)-[protein] + Fe(3+)-[Dph3]. The enzyme catalyses 2 [3Fe-4S](0)-[protein] + 2 Fe(2+)-[Dph3] + NADH = 2 [4Fe-4S](1+)-[protein] + 2 [Dph3] + NAD(+) + H(+). The protein operates within protein modification; peptidyl-diphthamide biosynthesis. Functionally, required for the first step of diphthamide biosynthesis, a post-translational modification of histidine which occurs in elongation factor 2. Dph-1 and dph-2 transfer a 3-amino-3-carboxypropyl (ACP) group from S-adenosyl-L-methionine (SAM) to a histidine residue, the reaction is assisted by a reduction system comprising dph-3 and a NADH-dependent reductase. Acts as an electron donor to reduce the Fe-S cluster in dph1-dph2 keeping the [4Fe-4S] clusters in the active and reduced state. Restores iron to dph-1-dph-2 iron-sulfur clusters which have degraded from [4Fe-4S] to [3Fe-4S] by donating an iron atom to reform [4Fe-4S] clusters, in a manner dependent on the presence of elongation factor 2 and SAM. Associates with the elongator complex and is required for tRNA Wobble base modifications mediated by the elongator complex. The elongator complex is required for multiple tRNA modifications, including mcm5U (5-methoxycarbonylmethyl uridine), mcm5s 2U (5-methoxycarbonylmethyl-2-thiouridine), and ncm5U (5-carbamoylmethyl uridine). This chain is Diphthamide biosynthesis protein 3, found in Caenorhabditis elegans.